The sequence spans 210 residues: Ras-related protein Rab-43 (210 aa).

23–30 contacts GTP; sequence GDASVGKT. An Effector region motif is present at residues 45–53; the sequence is QGSTIGVDF. A Phosphoserine modification is found at S47. Position 71-75 (71-75) interacts with GTP; that stretch reads DTAGQ. The residue at position 80 (T80) is a Phosphothreonine. GTP contacts are provided by residues 129–132 and 161–162; these read NKSD and AK. S-geranylgeranyl cysteine attachment occurs at residues C208 and C210. A Cysteine methyl ester modification is found at C210.

Belongs to the small GTPase superfamily. Rab family. As to quaternary structure, interacts with GDI1, GDI2 and CHM; phosphorylation at Thr-80 disrupts these interactions.

It is found in the cytoplasmic vesicle. Its subcellular location is the phagosome. The protein resides in the phagosome membrane. The protein localises to the golgi apparatus. It localises to the trans-Golgi network membrane. It is found in the trans-Golgi network. The small GTPases Rab are key regulators of intracellular membrane trafficking, from the formation of transport vesicles to their fusion with membranes. Rabs cycle between an inactive GDP-bound form and an active GTP-bound form that is able to recruit to membranes different set of downstream effectors directly responsible for vesicle formation, movement, tethering and fusion. The low intrinsic GTPase activity of RAB43 is activated by USP6NL. Involved in retrograde transport from the endocytic pathway to the Golgi apparatus. Involved in the transport of Shiga toxin from early and recycling endosomes to the trans-Golgi network. Required for the structural integrity of the Golgi complex. Plays a role in the maturation of phagosomes that engulf pathogens, such as S.aureus and Mycobacterium. The protein is Ras-related protein Rab-43 (Rab43) of Rattus norvegicus (Rat).